Consider the following 103-residue polypeptide: Large ribosomal subunit protein uL24 (103 aa).

This sequence belongs to the universal ribosomal protein uL24 family. As to quaternary structure, part of the 50S ribosomal subunit.

Its function is as follows. One of two assembly initiator proteins, it binds directly to the 5'-end of the 23S rRNA, where it nucleates assembly of the 50S subunit. Functionally, one of the proteins that surrounds the polypeptide exit tunnel on the outside of the subunit. This chain is Large ribosomal subunit protein uL24, found in Latilactobacillus sakei subsp. sakei (strain 23K) (Lactobacillus sakei subsp. sakei).